We begin with the raw amino-acid sequence, 80 residues long: uncharacterized protein (80 aa).

The first 15 residues, 1-15, serve as a signal peptide directing secretion; the sequence is MEVIVVIVVIVVVIA. Over residues 23-44 the composition is skewed to low complexity; that stretch reads NSNSNSNNSSDSSNESNNSDSS. The tract at residues 23-52 is disordered; sequence NSNSNSNNSSDSSNESNNSDSSKNGGSDIY. N-linked (GlcNAc...) asparagine glycosylation is found at Asn-29, Asn-30, Asn-36, Asn-39, and Asn-64.

It is found in the secreted. This is an uncharacterized protein from Dictyostelium discoideum (Social amoeba).